The primary structure comprises 936 residues: MTDYKDTLNLPQTDFPMRANLPEREPQTLARWQTLDLYRKIRKDREGQPKFILHDGPPYANGRAHLGTAFNKTLKDIVVKSKTLSGFDAPFVPGWDCHGLPIELNVEKKLGKDKLSANAFRQACRDYAFSQIELQRDDFQRLGVLGDWQHPYLTMDFGYEADTVRALAKIVANGHLLRGQKPVHWCAACGSALAEAEVEYRDKASPAVDVGFEAVDAEAVRQRFGVKNATTRVLVPIWTTTPWTLPANEAVSVHPELHYALVKSELQNQPVYLILAKDLVDSAMQRYGVDDYEVHGNLKGDALEGMQLQHPFLDRIVPIILGEHVTTEAGTGNVHTAPAHGLEDYFVAEKYNLPINNPVDARGRFIPDTFLVGGQPVFKANEPIIVLLADSGHLLHSETIQHSYPHCWRHKTPLIFRTTPQWFIGMNKNGLRERALAEIEKVTWLPAWGEARIGKMVADRPDWCISRQRLWGIPIPLFIHKKSGELHPKSPALMEKVAQLIEKESVDAWFDLDPKVLLGDDADHYEKVTDVLDVWFDSGVTHFCVLEKRRELKVPADIYLEGSDQHRGWFQSSLLTSLAIRDKAPYKSVLTYGFVVDSQGRKMSKSLGNVILPADVVKNLGADVLRLWAASMDYTVEVNVSDEILKRASDAYRRIRNTARFLLSNLYDFDPKKDKVAVDQLVALDRWAIFTTQKLQEKIITAYDRYRFPAIYQAIHNFCTVEMGSFYLDIIKDRLYTSKESGLPRRSAQTALYYIAEAFVRWIAPIISFTADEIWQFMPGDREPSVFLTQWFSDFPNAALSGEEEQRWQLLLQIRDEVNKALETYRNEGKIGSALAAEVVLYADERLNAAIATLGEELRFVLITSEASVLPFNEKSKAAFDTALPGLALEINVSEFEKCARCWQRRSSVGQIKEHADLCDRCVSNAFEDGEMRQFA.

The 'HIGH' region signature appears at 58–68; the sequence is PYANGRAHLGT. L-isoleucyl-5'-AMP is bound at residue E561. The 'KMSKS' region motif lies at 602 to 606; sequence KMSKS. Residue K605 coordinates ATP. The Zn(2+) site is built by C899, C902, C919, and C922.

This sequence belongs to the class-I aminoacyl-tRNA synthetase family. IleS type 1 subfamily. In terms of assembly, monomer. The cofactor is Zn(2+).

The protein resides in the cytoplasm. The enzyme catalyses tRNA(Ile) + L-isoleucine + ATP = L-isoleucyl-tRNA(Ile) + AMP + diphosphate. Its function is as follows. Catalyzes the attachment of isoleucine to tRNA(Ile). As IleRS can inadvertently accommodate and process structurally similar amino acids such as valine, to avoid such errors it has two additional distinct tRNA(Ile)-dependent editing activities. One activity is designated as 'pretransfer' editing and involves the hydrolysis of activated Val-AMP. The other activity is designated 'posttransfer' editing and involves deacylation of mischarged Val-tRNA(Ile). The sequence is that of Isoleucine--tRNA ligase from Coxiella burnetii (strain Dugway 5J108-111).